Reading from the N-terminus, the 320-residue chain is Short-chain dehydrogenase/reductase ARMGADRAFT_1169971 (320 aa).

Residues 19–39 (KVAVVTGANSGIGLYILFHVA) traverse the membrane as a helical segment. The NADP(+) site is built by isoleucine 30, aspartate 78, asparagine 105, and lysine 136. Residue asparagine 157 is glycosylated (N-linked (GlcNAc...) asparagine). Serine 159 acts as the Proton donor in catalysis. Positions 192, 196, 227, and 229 each coordinate NADP(+). The Proton acceptor role is filled by tyrosine 192. Lysine 196 acts as the Lowers pKa of active site Tyr in catalysis. The helical transmembrane segment at 235–255 (LFTSLMFGTIINWVFSLFFIS) threads the bilayer.

The protein belongs to the short-chain dehydrogenases/reductases (SDR) family.

The protein resides in the membrane. It participates in secondary metabolite biosynthesis. Functionally, short-chain dehydrogenase/reductase, part of the gene cluster that mediates the biosynthesis of melleolides, a range of antifungal and phytotoxic polyketide derivatives composed of an orsellinic acid (OA) moiety esterified to various sesquiterpene alcohols. The first step in melleolides biosynthesis is performed by the delta(6)-protoilludene synthase PRO1 which catalyzes the cyclization of farnesyl diphosphate to protoilludene. The orsellinic acid synthase armB produces OA by condensing acetyl-CoA with 3 malonyl-CoA units in a three-round chain elongation reaction folowed by a C2-C7 ring closure. ArmB further catalyzes the trans-esterification of OA to the various sesquiterpene alcohols resulting from the hydroxylation of protoilludene. The melleolides cluster also includes 5 cytochrome P450 monooxygenases, 4 NAD(+)-dependent oxidoreductases, one flavin-dependent oxidoreductase, and one O-methyltransferase. The cytochrome P450 monooxygenases may be involved in protoilludene hydroxylation to elaborate melleolides with multiple alcohol groups, such as melleolide D, which carries alcohol functionalities at C-4, C-5, C-10, and C-13. The role of the NAD(+)-dependent enzymes remains unknown. Numerous melleolides, including arnamial, show 5'-O-methylation of the aromatic moiety which may be catalyzed by the methyltransferase encoded in the cluster. The flavin-dependent oxidoreductase might represent the dehydrogenase yielding the aldehyde in position 1 of arnamial and other melleolides. Finally, several halogenase localized outside of the cluster, are able to catalyze the transfer of a single chlorine atom to the melleolide backbone, resulting in a 6'-chloromelleolide product. The protein is Short-chain dehydrogenase/reductase ARMGADRAFT_1169971 of Armillaria gallica (Bulbous honey fungus).